We begin with the raw amino-acid sequence, 152 residues long: MGKGVAVLNSSEGVKGTIFFAQEGEGKTTVTGTVSGLKPGLHGFHVHALGDTTNGSMSTGPHFNPDGKQHGAPEDANRHAGDLGNIIVGDDGTATFTITDCQIPLSGPNSIVGRAVVVHADPDVLGKGGHELSLTTGNAGGRVACGIIGLQG.

3 residues coordinate Cu cation: H45, H47, and H62. The disordered stretch occupies residues T53–G81. Zn(2+) is bound by residues H62, H70, H79, and D82. Residues P65–G81 show a composition bias toward basic and acidic residues. H119 provides a ligand contact to Cu cation.

The protein belongs to the Cu-Zn superoxide dismutase family. In terms of assembly, homodimer. It depends on Cu cation as a cofactor. The cofactor is Zn(2+).

It is found in the cytoplasm. It carries out the reaction 2 superoxide + 2 H(+) = H2O2 + O2. In terms of biological role, destroys radicals which are normally produced within the cells and which are toxic to biological systems. The protein is Superoxide dismutase [Cu-Zn] 2 (SODCC2) of Brassica juncea (Indian mustard).